Consider the following 369-residue polypeptide: Protein pxr-1 (369 aa).

The interval 1–23 (MGLAAAKNKRKLGTDPNNTKWSR) is disordered. A G-patch domain is found at 25-79 (ETTFGQKILRAQGWQPGEFLGAKDAAHAVHHTEASSSHIKVTLKDDNLGLGAKRN). The disordered stretch occupies residues 147-338 (EEDGVPQSDT…GTSTPTVTSS (192 aa)). Polar residues predominate over residues 153–167 (QSDTVDQQVETVPSQ). Over residues 218–227 (SKKKEKKDKK) the composition is skewed to basic residues. The segment covering 228-237 (EKKDQKEKKD) has biased composition (basic and acidic residues). A compositionally biased stretch (basic residues) spans 267–292 (KSKKDKKKEKKEKKDKKKDKKEKKRK). Residues 304-318 (EDSKSKAQKRTKDGA) show a composition bias toward basic and acidic residues. Low complexity predominate over residues 322–338 (TSTPGGSGTSTPTVTSS).

It belongs to the PINX1 family.

The protein resides in the nucleus. Its subcellular location is the nucleolus. Functionally, involved in rRNA-processing at A0, A1 and A2 sites and negatively regulates telomerase. In Neurospora crassa (strain ATCC 24698 / 74-OR23-1A / CBS 708.71 / DSM 1257 / FGSC 987), this protein is Protein pxr-1 (pxr-1).